Here is a 302-residue protein sequence, read N- to C-terminus: Nitrophorin Cim l NP (302 aa).

The signal sequence occupies residues 1–20; it reads MKLLLSAGAALAFVLGLCAA. Cysteine 80 contacts heme.

Heme b serves as cofactor. The N-terminus is blocked. Expressed in salivary glands.

It is found in the secreted. In terms of biological role, heme-based protein that delivers nitric oxide gas (NO) to the victim while feeding, resulting in vasodilation. In place of heme, the heme-binding cysteine can also reversibly bind NO when it is present in high concentrations. The sequence is that of Nitrophorin Cim l NP from Cimex lectularius (Bed bug).